A 53-amino-acid chain; its full sequence is MPQMMPLPWIMVFLVSMALLWAIMTMVFFLYQPRSVSSAKGFSDRTVYLNWKW.

A helical transmembrane segment spans residues 10 to 30 (IMVFLVSMALLWAIMTMVFFL).

The protein belongs to the ATPase protein 8 family. F-type ATPases have 2 components, CF(1) - the catalytic core - and CF(0) - the membrane proton channel.

It localises to the mitochondrion membrane. Functionally, mitochondrial membrane ATP synthase (F(1)F(0) ATP synthase or Complex V) produces ATP from ADP in the presence of a proton gradient across the membrane which is generated by electron transport complexes of the respiratory chain. F-type ATPases consist of two structural domains, F(1) - containing the extramembraneous catalytic core and F(0) - containing the membrane proton channel, linked together by a central stalk and a peripheral stalk. During catalysis, ATP synthesis in the catalytic domain of F(1) is coupled via a rotary mechanism of the central stalk subunits to proton translocation. Part of the complex F(0) domain. Minor subunit located with subunit a in the membrane. The chain is ATP synthase protein 8 (MT-ATP8) from Artemia franciscana (Brine shrimp).